The sequence spans 315 residues: tRNA-cytidine(32) 2-sulfurtransferase (315 aa).

The short motif at Ser-54–Ser-59 is the PP-loop motif element. Positions 129, 132, and 220 each coordinate [4Fe-4S] cluster.

Belongs to the TtcA family. Homodimer. The cofactor is Mg(2+). [4Fe-4S] cluster serves as cofactor.

Its subcellular location is the cytoplasm. It catalyses the reaction cytidine(32) in tRNA + S-sulfanyl-L-cysteinyl-[cysteine desulfurase] + AH2 + ATP = 2-thiocytidine(32) in tRNA + L-cysteinyl-[cysteine desulfurase] + A + AMP + diphosphate + H(+). It participates in tRNA modification. Its function is as follows. Catalyzes the ATP-dependent 2-thiolation of cytidine in position 32 of tRNA, to form 2-thiocytidine (s(2)C32). The sulfur atoms are provided by the cysteine/cysteine desulfurase (IscS) system. This is tRNA-cytidine(32) 2-sulfurtransferase from Bordetella avium (strain 197N).